The chain runs to 117 residues: uncharacterized protein (117 aa).

Residues 96–117 (RKGGASKHRTLSAETGIRGEGE) are disordered.

This is an uncharacterized protein from Saccharomyces cerevisiae (strain ATCC 204508 / S288c) (Baker's yeast).